Reading from the N-terminus, the 104-residue chain is N(4)-acetylcytidine amidohydrolase (104 aa).

One can recognise an ASCH domain in the interval 7–93 (MTFFSRFEAD…EVIQEIYPGI (87 aa)). K22 serves as the catalytic Proton acceptor. The active-site Nucleophile is the T25. E75 (proton donor) is an active-site residue.

The protein belongs to the N(4)-acetylcytidine amidohydrolase family.

The enzyme catalyses N(4)-acetylcytidine + H2O = cytidine + acetate + H(+). It catalyses the reaction N(4)-acetyl-2'-deoxycytidine + H2O = 2'-deoxycytidine + acetate + H(+). The catalysed reaction is N(4)-acetylcytosine + H2O = cytosine + acetate + H(+). Catalyzes the hydrolysis of N(4)-acetylcytidine (ac4C). This Vibrio vulnificus (strain YJ016) protein is N(4)-acetylcytidine amidohydrolase.